Here is a 298-residue protein sequence, read N- to C-terminus: Acetylglutamate kinase (298 aa).

Substrate contacts are provided by residues 69-70 (GG), arginine 91, and asparagine 191.

This sequence belongs to the acetylglutamate kinase family. ArgB subfamily.

The protein resides in the cytoplasm. The catalysed reaction is N-acetyl-L-glutamate + ATP = N-acetyl-L-glutamyl 5-phosphate + ADP. It participates in amino-acid biosynthesis; L-arginine biosynthesis; N(2)-acetyl-L-ornithine from L-glutamate: step 2/4. Catalyzes the ATP-dependent phosphorylation of N-acetyl-L-glutamate. This is Acetylglutamate kinase from Neisseria meningitidis serogroup A / serotype 4A (strain DSM 15465 / Z2491).